Here is an 847-residue protein sequence, read N- to C-terminus: Bifunctional protein argC, mitochondrial (847 aa).

Positions 100 to 331 (QIVLVKIGGG…PPSTSITITS (232 aa)) are acetylglutamate kinase. The region spanning 352–508 (GEVMHSHESP…CLSQSSTYLS (157 aa)) is the N-acetyltransferase domain. The tract at residues 531–846 (FRVGLIGARG…LDELASIKNE (316 aa)) is N-acetyl-gamma-glutamyl-phosphate reductase. Cys-665 is a catalytic residue.

This sequence in the N-terminal section; belongs to the acetylglutamate kinase family. In the C-terminal section; belongs to the NAGSA dehydrogenase family.

Its subcellular location is the mitochondrion. It catalyses the reaction N-acetyl-L-glutamate 5-semialdehyde + phosphate + NADP(+) = N-acetyl-L-glutamyl 5-phosphate + NADPH + H(+). The catalysed reaction is N-acetyl-L-glutamate + ATP = N-acetyl-L-glutamyl 5-phosphate + ADP. It participates in amino-acid biosynthesis; L-arginine biosynthesis; N(2)-acetyl-L-ornithine from L-glutamate: step 2/4. Its pathway is amino-acid biosynthesis; L-arginine biosynthesis; N(2)-acetyl-L-ornithine from L-glutamate: step 3/4. The sequence is that of Bifunctional protein argC, mitochondrial (argC) from Dictyostelium discoideum (Social amoeba).